We begin with the raw amino-acid sequence, 438 residues long: Xylose isomerase (438 aa).

Active-site residues include histidine 100 and aspartate 103. Mg(2+) contacts are provided by glutamate 231, glutamate 267, histidine 270, aspartate 295, aspartate 306, aspartate 308, and aspartate 338.

It belongs to the xylose isomerase family. Homotetramer. The cofactor is Mg(2+).

It is found in the cytoplasm. It carries out the reaction alpha-D-xylose = alpha-D-xylulofuranose. This chain is Xylose isomerase, found in Pseudomonas fluorescens (strain Pf0-1).